The following is a 54-amino-acid chain: Photoreceptor disk component PRCD (54 aa).

C2 carries the S-palmitoyl cysteine lipid modification. The interval 24–54 (QPEPNGVDGAVSGSSLETDLQSSGREKEPLK) is disordered. The span at 35 to 46 (SGSSLETDLQSS) shows a compositional bias: polar residues.

Belongs to the PRCD family. Interacts with RHO/rhodopsin; the interaction promotes PRCD stability. In terms of processing, palmitoylated at Cys-2. Palmitoylation is essential for protein stability and trafficking to the photoreceptor outer segment, but does not appear to be essential for membrane localization. Probably palmitoylated by ZDHHC3. Post-translationally, phosphorylated. In terms of tissue distribution, expressed in retina (at protein level).

It localises to the cell projection. Its subcellular location is the cilium. It is found in the photoreceptor outer segment. The protein localises to the membrane. The protein resides in the endoplasmic reticulum. It localises to the golgi apparatus. Its function is as follows. Involved in vision. This Bos taurus (Bovine) protein is Photoreceptor disk component PRCD.